The chain runs to 592 residues: V-type ATP synthase alpha chain (592 aa).

232-239 is a binding site for ATP; it reads GPFGSGKT.

It belongs to the ATPase alpha/beta chains family.

It carries out the reaction ATP + H2O + 4 H(+)(in) = ADP + phosphate + 5 H(+)(out). Produces ATP from ADP in the presence of a proton gradient across the membrane. The V-type alpha chain is a catalytic subunit. The polypeptide is V-type ATP synthase alpha chain (Clostridioides difficile (strain 630) (Peptoclostridium difficile)).